The primary structure comprises 325 residues: NADH-quinone oxidoreductase subunit H (325 aa).

8 helical membrane passes run isoleucine 11 to phenylalanine 31, valine 81 to valine 101, isoleucine 114 to glycine 134, leucine 154 to phenylalanine 174, leucine 186 to valine 206, phenylalanine 237 to phenylalanine 257, leucine 265 to isoleucine 285, and valine 304 to alanine 324.

Belongs to the complex I subunit 1 family. As to quaternary structure, NDH-1 is composed of 13 different subunits. Subunits NuoA, H, J, K, L, M, N constitute the membrane sector of the complex.

It is found in the cell inner membrane. It carries out the reaction a quinone + NADH + 5 H(+)(in) = a quinol + NAD(+) + 4 H(+)(out). NDH-1 shuttles electrons from NADH, via FMN and iron-sulfur (Fe-S) centers, to quinones in the respiratory chain. The immediate electron acceptor for the enzyme in this species is believed to be ubiquinone. Couples the redox reaction to proton translocation (for every two electrons transferred, four hydrogen ions are translocated across the cytoplasmic membrane), and thus conserves the redox energy in a proton gradient. This subunit may bind ubiquinone. The protein is NADH-quinone oxidoreductase subunit H of Klebsiella pneumoniae (strain 342).